Reading from the N-terminus, the 262-residue chain is Hydroxyethylthiazole kinase (262 aa).

Residue Met43 coordinates substrate. ATP is bound by residues Arg118 and Thr164. Ala191 provides a ligand contact to substrate.

The protein belongs to the Thz kinase family. Requires Mg(2+) as cofactor.

It carries out the reaction 5-(2-hydroxyethyl)-4-methylthiazole + ATP = 4-methyl-5-(2-phosphooxyethyl)-thiazole + ADP + H(+). It functions in the pathway cofactor biosynthesis; thiamine diphosphate biosynthesis; 4-methyl-5-(2-phosphoethyl)-thiazole from 5-(2-hydroxyethyl)-4-methylthiazole: step 1/1. Catalyzes the phosphorylation of the hydroxyl group of 4-methyl-5-beta-hydroxyethylthiazole (THZ). In Cereibacter sphaeroides (strain ATCC 17023 / DSM 158 / JCM 6121 / CCUG 31486 / LMG 2827 / NBRC 12203 / NCIMB 8253 / ATH 2.4.1.) (Rhodobacter sphaeroides), this protein is Hydroxyethylthiazole kinase.